Consider the following 603-residue polypeptide: Elongation factor 4 (603 aa).

The 183-residue stretch at 7-189 (KKIRNFCIIA…SVVKNVPPPE (183 aa)) folds into the tr-type G domain. Residues 19-24 (DHGKST) and 136-139 (NKID) contribute to the GTP site.

This sequence belongs to the TRAFAC class translation factor GTPase superfamily. Classic translation factor GTPase family. LepA subfamily.

It is found in the cell membrane. The catalysed reaction is GTP + H2O = GDP + phosphate + H(+). Its function is as follows. Required for accurate and efficient protein synthesis under certain stress conditions. May act as a fidelity factor of the translation reaction, by catalyzing a one-codon backward translocation of tRNAs on improperly translocated ribosomes. Back-translocation proceeds from a post-translocation (POST) complex to a pre-translocation (PRE) complex, thus giving elongation factor G a second chance to translocate the tRNAs correctly. Binds to ribosomes in a GTP-dependent manner. The sequence is that of Elongation factor 4 from Acetivibrio thermocellus (strain ATCC 27405 / DSM 1237 / JCM 9322 / NBRC 103400 / NCIMB 10682 / NRRL B-4536 / VPI 7372) (Clostridium thermocellum).